The following is a 256-amino-acid chain: Undecaprenyl-diphosphatase (256 aa).

Transmembrane regions (helical) follow at residues Met1 to Ile21, Asn39 to Phe59, Ile70 to Phe90, Leu97 to Val117, Ala134 to Gly154, Ala176 to Leu196, Ala205 to Ile225, and Phe235 to Phe255.

It belongs to the UppP family.

It localises to the cell inner membrane. It carries out the reaction di-trans,octa-cis-undecaprenyl diphosphate + H2O = di-trans,octa-cis-undecaprenyl phosphate + phosphate + H(+). Its function is as follows. Catalyzes the dephosphorylation of undecaprenyl diphosphate (UPP). Confers resistance to bacitracin. In Sulfurimonas denitrificans (strain ATCC 33889 / DSM 1251) (Thiomicrospira denitrificans (strain ATCC 33889 / DSM 1251)), this protein is Undecaprenyl-diphosphatase.